Consider the following 790-residue polypeptide: Protein SEY1 (790 aa).

The Cytoplasmic portion of the chain corresponds to 1–692 (MELSEGELSH…KRSIVQHITQ (692 aa)). Positions 55–284 (GNNYHIISVF…VNNELFKPEY (230 aa)) constitute a GB1/RHD3-type G domain. 65–72 (GSQSTGKS) contributes to the GTP binding site. The chain crosses the membrane as a helical span at residues 693–713 (IPYYIYLIILVLGWNEFMAII). Residues 714-716 (RNP) are Lumenal-facing. Residues 717 to 737 (LFFSLSIVLGATVYVLYYLNL) form a helical membrane-spanning segment. Residues 738–790 (LKPAMLVAQRTMDEVIIMAKTKLREVLIDDHEVTGRQLNKIAGGKENIELDDM) are Cytoplasmic-facing.

This sequence belongs to the TRAFAC class dynamin-like GTPase superfamily. GB1/RHD3 GTPase family. RHD3 subfamily.

The protein localises to the endoplasmic reticulum membrane. Functionally, cooperates with the reticulon proteins and tubule-shaping DP1 family proteins to generate and maintain the structure of the tubular endoplasmic reticulum network. Has GTPase activity, which is required for its function in ER organization. This Candida dubliniensis (strain CD36 / ATCC MYA-646 / CBS 7987 / NCPF 3949 / NRRL Y-17841) (Yeast) protein is Protein SEY1.